Here is a 473-residue protein sequence, read N- to C-terminus: MILPDFSLARVLVVGDLMLDRYWFGGASRISPEAPVPVVRVESSEERIGGAGNVALNLAALGGEVDLLGYAGEDEAAAALERLLAVAGIRSHIERCPAVATITKLRVVSRQQQLIRLDFEDGFAHLDPAPLVTRFRALLEETGVVVLSDYAKGTLACVEEFIAASRRAGKPVLVDPKGVDFDRYRGATLLTPNLSEFEAVVGACCDDAEIERKGRALMTRLDLEALLVTRGEHGMSLLRPTAGALHLPAHGKEVYDVTGAGDTVISVLAAALAVGRPLTDAVALANLAAGIVVGKLGTASVSPEELAIAIHGQRAPRRGAITLAELLDVLIPLRRAGERIVVTNGCFDLLHPGHVHYLEQARALGDRLIVLVNGDDSVRRLKGAGRPVNPLPHRMAMLAALESVDWVVAFDGDTPRDEICAIRPHVLVKGGDYADITAIVGHDCVLETGGEVRILDFVEGHSTTRIIEAIRNG.

The ribokinase stretch occupies residues 1–316; the sequence is MILPDFSLAR…AIAIHGQRAP (316 aa). 193-196 serves as a coordination point for ATP; it reads NLSE. The active site involves D262. The segment at 342-473 is cytidylyltransferase; sequence VTNGCFDLLH…TRIIEAIRNG (132 aa).

This sequence in the N-terminal section; belongs to the carbohydrate kinase PfkB family. In the C-terminal section; belongs to the cytidylyltransferase family. Homodimer.

The catalysed reaction is D-glycero-beta-D-manno-heptose 7-phosphate + ATP = D-glycero-beta-D-manno-heptose 1,7-bisphosphate + ADP + H(+). The enzyme catalyses D-glycero-beta-D-manno-heptose 1-phosphate + ATP + H(+) = ADP-D-glycero-beta-D-manno-heptose + diphosphate. Its pathway is nucleotide-sugar biosynthesis; ADP-L-glycero-beta-D-manno-heptose biosynthesis; ADP-L-glycero-beta-D-manno-heptose from D-glycero-beta-D-manno-heptose 7-phosphate: step 1/4. It participates in nucleotide-sugar biosynthesis; ADP-L-glycero-beta-D-manno-heptose biosynthesis; ADP-L-glycero-beta-D-manno-heptose from D-glycero-beta-D-manno-heptose 7-phosphate: step 3/4. Functionally, catalyzes the phosphorylation of D-glycero-D-manno-heptose 7-phosphate at the C-1 position to selectively form D-glycero-beta-D-manno-heptose-1,7-bisphosphate. Catalyzes the ADP transfer from ATP to D-glycero-beta-D-manno-heptose 1-phosphate, yielding ADP-D-glycero-beta-D-manno-heptose. The protein is Bifunctional protein HldE of Methylococcus capsulatus (strain ATCC 33009 / NCIMB 11132 / Bath).